The primary structure comprises 1189 residues: Pyruvate carboxylase (1189 aa).

The region spanning 21–473 (TMNKILVANR…WTTFIDDTPE (453 aa)) is the Biotin carboxylation domain. Positions 139, 223, and 258 each coordinate ATP. An ATP-grasp domain is found at 143–340 (RNLAYAANVP…IVAAQIQIAA (198 aa)). The active site involves Arg315. A Pyruvate carboxyltransferase domain is found at 559–826 (LMIMDTTWRD…ETGIPEANAR (268 aa)). Residues 567–571 (RDAHQ) and Arg640 contribute to the substrate site. Residue Asp568 coordinates a divalent metal cation. Lys736, His766, and His768 together coordinate a divalent metal cation. Position 736 is an N6-carboxylysine (Lys736). Thr900 is a binding site for substrate. Residues 1099-1174 (KADAHNPNEI…DASDLIPKSS (76 aa)) form the Biotinyl-binding domain. Residue Lys1140 is modified to N6-biotinyllysine.

Biotin serves as cofactor. The cofactor is Zn(2+).

The protein localises to the cytoplasm. The enzyme catalyses hydrogencarbonate + pyruvate + ATP = oxaloacetate + ADP + phosphate + H(+). It participates in carbohydrate biosynthesis; gluconeogenesis. Pyruvate carboxylase catalyzes a 2-step reaction, involving the ATP-dependent carboxylation of the covalently attached biotin in the first step and the transfer of the carboxyl group to pyruvate in the second. The sequence is that of Pyruvate carboxylase (PYC1) from Komagataella pastoris (Yeast).